Reading from the N-terminus, the 876-residue chain is Alanine--tRNA ligase (876 aa).

Residues histidine 568, histidine 572, cysteine 669, and histidine 673 each coordinate Zn(2+).

It belongs to the class-II aminoacyl-tRNA synthetase family. Zn(2+) is required as a cofactor.

The protein resides in the cytoplasm. It catalyses the reaction tRNA(Ala) + L-alanine + ATP = L-alanyl-tRNA(Ala) + AMP + diphosphate. In terms of biological role, catalyzes the attachment of alanine to tRNA(Ala) in a two-step reaction: alanine is first activated by ATP to form Ala-AMP and then transferred to the acceptor end of tRNA(Ala). Also edits incorrectly charged Ser-tRNA(Ala) and Gly-tRNA(Ala) via its editing domain. In Sulfurihydrogenibium sp. (strain YO3AOP1), this protein is Alanine--tRNA ligase.